The chain runs to 70 residues: DNA gyrase inhibitor YacG (70 aa).

Residues C7, C10, C26, and C30 each coordinate Zn(2+).

It belongs to the DNA gyrase inhibitor YacG family. In terms of assembly, interacts with GyrB. Requires Zn(2+) as cofactor.

Inhibits all the catalytic activities of DNA gyrase by preventing its interaction with DNA. Acts by binding directly to the C-terminal domain of GyrB, which probably disrupts DNA binding by the gyrase. This Shewanella woodyi (strain ATCC 51908 / MS32) protein is DNA gyrase inhibitor YacG.